The sequence spans 157 residues: Protein Smg homolog (157 aa).

Belongs to the Smg family.

The sequence is that of Protein Smg homolog from Aliivibrio salmonicida (strain LFI1238) (Vibrio salmonicida (strain LFI1238)).